The primary structure comprises 252 residues: Triosephosphate isomerase (252 aa).

A substrate-binding site is contributed by 9 to 11; sequence NWK. The active-site Electrophile is His96. The Proton acceptor role is filled by Glu166. Residues Gly172, Ser212, and 233-234 contribute to the substrate site; that span reads GG.

The protein belongs to the triosephosphate isomerase family. As to quaternary structure, homodimer.

It is found in the cytoplasm. The catalysed reaction is D-glyceraldehyde 3-phosphate = dihydroxyacetone phosphate. It functions in the pathway carbohydrate biosynthesis; gluconeogenesis. Its pathway is carbohydrate degradation; glycolysis; D-glyceraldehyde 3-phosphate from glycerone phosphate: step 1/1. Its function is as follows. Involved in the gluconeogenesis. Catalyzes stereospecifically the conversion of dihydroxyacetone phosphate (DHAP) to D-glyceraldehyde-3-phosphate (G3P). This is Triosephosphate isomerase from Chlorobium chlorochromatii (strain CaD3).